A 396-amino-acid polypeptide reads, in one-letter code: NADH-quinone oxidoreductase subunit D (396 aa).

Belongs to the complex I 49 kDa subunit family. NDH-1 is composed of 14 different subunits. Subunits NuoB, C, D, E, F, and G constitute the peripheral sector of the complex.

It is found in the cell inner membrane. The catalysed reaction is a quinone + NADH + 5 H(+)(in) = a quinol + NAD(+) + 4 H(+)(out). In terms of biological role, NDH-1 shuttles electrons from NADH, via FMN and iron-sulfur (Fe-S) centers, to quinones in the respiratory chain. The immediate electron acceptor for the enzyme in this species is believed to be ubiquinone. Couples the redox reaction to proton translocation (for every two electrons transferred, four hydrogen ions are translocated across the cytoplasmic membrane), and thus conserves the redox energy in a proton gradient. This is NADH-quinone oxidoreductase subunit D from Rhodopseudomonas palustris (strain BisB18).